We begin with the raw amino-acid sequence, 102 residues long: MFAIIKTGGKQYKVSEGDIIKVEKIEAEAGDKIEFDQVLMVAGDDVKVGSPVVEGAKVSAEVLDQKKDKKIVIFKFKAKKNYRKKKGHRQPYTLVKIEKIDA.

The protein belongs to the bacterial ribosomal protein bL21 family. As to quaternary structure, part of the 50S ribosomal subunit. Contacts protein L20.

Its function is as follows. This protein binds to 23S rRNA in the presence of protein L20. This Finegoldia magna (strain ATCC 29328 / DSM 20472 / WAL 2508) (Peptostreptococcus magnus) protein is Large ribosomal subunit protein bL21.